The sequence spans 103 residues: Small ribosomal subunit protein uS10 (103 aa).

The protein belongs to the universal ribosomal protein uS10 family. Part of the 30S ribosomal subunit.

Involved in the binding of tRNA to the ribosomes. The protein is Small ribosomal subunit protein uS10 of Persephonella marina (strain DSM 14350 / EX-H1).